The sequence spans 324 residues: Delta-aminolevulinic acid dehydratase (324 aa).

Zn(2+) is bound by residues Cys-118, Cys-120, and Cys-128. Lys-195 (schiff-base intermediate with substrate) is an active-site residue. Arg-205 and Arg-217 together coordinate 5-aminolevulinate. Residue Glu-233 participates in Mg(2+) binding. The active-site Schiff-base intermediate with substrate is the Lys-248. Residues Ser-274 and Tyr-313 each contribute to the 5-aminolevulinate site.

This sequence belongs to the ALAD family. In terms of assembly, homooctamer. Zn(2+) serves as cofactor.

It carries out the reaction 2 5-aminolevulinate = porphobilinogen + 2 H2O + H(+). It functions in the pathway porphyrin-containing compound metabolism; protoporphyrin-IX biosynthesis; coproporphyrinogen-III from 5-aminolevulinate: step 1/4. Catalyzes an early step in the biosynthesis of tetrapyrroles. Binds two molecules of 5-aminolevulinate per subunit, each at a distinct site, and catalyzes their condensation to form porphobilinogen. This Staphylococcus aureus (strain NCTC 8325 / PS 47) protein is Delta-aminolevulinic acid dehydratase (hemB).